The sequence spans 328 residues: Palmitoyltransferase ZDHHC15A (328 aa).

Residues 1 to 14 (MLLPACLRRCARLL) lie on the Cytoplasmic side of the membrane. The helical transmembrane segment at 15–35 (FWIPVLVVIVVVMWSYYAYVV) threads the bilayer. The Lumenal segment spans residues 36–48 (HFCWILLSSATQR). Residues 49–69 (VVFLCLFHLCFGMFSWSFWKA) traverse the membrane as a helical segment. Residues 70–166 (VSTPPSSPSV…NNCMGFSNYK (97 aa)) are Cytoplasmic-facing. Residues 123–173 (RFCHHCQLIKPDRCHHCSVCQTCVLKMDHHCLWLNNCMGFSNYKFFMLFLL) form the DHHC domain. Zn(2+) is bound by residues C125 and C128. K132 provides a ligand contact to substrate. Positions 138, 139, 142, 145, and 152 each coordinate Zn(2+). C153 serves as the catalytic S-palmitoyl cysteine intermediate. A Zn(2+)-binding site is contributed by C159. The chain crosses the membrane as a helical span at residues 167-187 (FFMLFLLYSLLYCLLIVSTVT). Topologically, residues 188–206 (PTVIQLWRGRLFDSCVKLH) are lumenal. A helical membrane pass occupies residues 207–227 (VLFLTLVSAIFAITLCFLLIF). The Cytoplasmic portion of the chain corresponds to 228-328 (HIWLLTSNKT…KEAAVTIAVD (101 aa)).

It belongs to the DHHC palmitoyltransferase family. In terms of processing, autopalmitoylated (in vitro).

It localises to the golgi apparatus membrane. It is found in the postsynaptic density. It carries out the reaction L-cysteinyl-[protein] + hexadecanoyl-CoA = S-hexadecanoyl-L-cysteinyl-[protein] + CoA. It catalyses the reaction L-cysteinyl-[protein] + tetradecanoyl-CoA = S-tetradecanoyl-L-cysteinyl-[protein] + CoA. The enzyme catalyses L-cysteinyl-[protein] + octadecanoyl-CoA = S-octadecanoyl-L-cysteinyl-[protein] + CoA. Functionally, palmitoyltransferase that catalyzes the addition of palmitate onto various protein substrates. Has no stringent fatty acid selectivity and in addition to palmitate can also transfer onto target proteins myristate from tetradecanoyl-CoA and stearate from octadecanoyl-CoA. May thereby regulate target proteins association and localization to membranes. The polypeptide is Palmitoyltransferase ZDHHC15A (zdhhc15a) (Danio rerio (Zebrafish)).